Reading from the N-terminus, the 969-residue chain is UvrABC system protein A (969 aa).

32-39 (GLSGSGKS) serves as a coordination point for ATP. The C4-type zinc-finger motif lies at 258–286 (CPNGHPLAVDDLEPRSFSFNSPYGACPEC). ABC transporter domains lie at 316–599 (WSAG…KDSI) and 619–948 (VDRK…KFLA). Residue 652–659 (GVSGSGKS) coordinates ATP. A C4-type zinc finger spans residues 751–777 (CEACTGDGTIKIEMNFLPDVYVPCEVC).

The protein belongs to the ABC transporter superfamily. UvrA family. As to quaternary structure, forms a heterotetramer with UvrB during the search for lesions.

It is found in the cytoplasm. Its function is as follows. The UvrABC repair system catalyzes the recognition and processing of DNA lesions. UvrA is an ATPase and a DNA-binding protein. A damage recognition complex composed of 2 UvrA and 2 UvrB subunits scans DNA for abnormalities. When the presence of a lesion has been verified by UvrB, the UvrA molecules dissociate. The polypeptide is UvrABC system protein A (Mycobacterium leprae (strain TN)).